A 159-amino-acid chain; its full sequence is RxLR effector protein 24 (159 aa).

A signal peptide spans 1–18; the sequence is MRFLVWVFFVGLVTFVSG. Residues 58-82 carry the RxLR-dEER motif; the sequence is RFLRSNANQDLTTANDDSDVKEEER. The tract at residues 109–159 is RABA-binding domain; sequence EKAFQHMMKQGETPTSLAKRLEIGGAAELRYEKVYEKYTAWWINYHTVAGT.

Belongs to the RxLR effector family. Interacts with potato RABA GTPases including RABA1a, RABA2a and RABA4a.

Its subcellular location is the secreted. The protein resides in the host cell membrane. The protein localises to the host endomembrane system. Functionally, effector protein that contributes to pathogen virulence. Targets members of the RABA GTPases subfamily to inhibit vesicular secretion, leading to an accumulation of secretory proteins in the endoplasmic reticulum. The polypeptide is RxLR effector protein 24 (Phytophthora infestans (strain T30-4) (Potato late blight agent)).